A 287-amino-acid polypeptide reads, in one-letter code: Eukaryotic translation initiation factor 3 subunit G (287 aa).

Disordered regions lie at residues 1-34 (MSKLANRADWADDEEFDDPSALPAQQVTTNKDGT) and 159-184 (TAGGAGEDDEAAAGAVGTGSGSYVPP). Residues 207–285 (ATLRVTNVSE…LILRVEFAKR (79 aa)) form the RRM domain.

Belongs to the eIF-3 subunit G family. In terms of assembly, component of the eukaryotic translation initiation factor 3 (eIF-3) complex.

It localises to the cytoplasm. Its function is as follows. RNA-binding component of the eukaryotic translation initiation factor 3 (eIF-3) complex, which is involved in protein synthesis of a specialized repertoire of mRNAs and, together with other initiation factors, stimulates binding of mRNA and methionyl-tRNAi to the 40S ribosome. The eIF-3 complex specifically targets and initiates translation of a subset of mRNAs involved in cell proliferation. This subunit can bind 18S rRNA. This chain is Eukaryotic translation initiation factor 3 subunit G (tif35), found in Aspergillus oryzae (strain ATCC 42149 / RIB 40) (Yellow koji mold).